The sequence spans 265 residues: Taurine import ATP-binding protein TauB (265 aa).

One can recognise an ABC transporter domain in the interval 7-236 (QNLNMIFKTP…MGIDGDLREI (230 aa)). 41-48 (GPSGCGKT) provides a ligand contact to ATP.

This sequence belongs to the ABC transporter superfamily. Taurine importer (TC 3.A.1.17.1) family. As to quaternary structure, the complex is composed of two ATP-binding proteins (TauB), two transmembrane proteins (TauC) and a solute-binding protein (TauA).

It localises to the cell inner membrane. The enzyme catalyses taurine(out) + ATP + H2O = taurine(in) + ADP + phosphate + H(+). Its function is as follows. Part of the ABC transporter complex TauABC involved in taurine import. Responsible for energy coupling to the transport system. This chain is Taurine import ATP-binding protein TauB, found in Pelagibacter ubique (strain HTCC1062).